The chain runs to 544 residues: Peptide chain release factor 3 (544 aa).

The 270-residue stretch at 17-286 (EKRRNFAIIS…SFLDYGLAPR (270 aa)) folds into the tr-type G domain. GTP-binding positions include 26–33 (SHPDAGKT), 94–98 (DTPGH), and 148–151 (NKMD).

The protein belongs to the TRAFAC class translation factor GTPase superfamily. Classic translation factor GTPase family. PrfC subfamily.

It localises to the cytoplasm. Increases the formation of ribosomal termination complexes and stimulates activities of RF-1 and RF-2. It binds guanine nucleotides and has strong preference for UGA stop codons. It may interact directly with the ribosome. The stimulation of RF-1 and RF-2 is significantly reduced by GTP and GDP, but not by GMP. This chain is Peptide chain release factor 3, found in Microcystis aeruginosa (strain NIES-843 / IAM M-2473).